The sequence spans 43 residues: Snaclec lebecetin subunit beta (43 aa).

Residues 1-43 (ALNCASGWSGGYDQHCYKVFDIPPSWAADEKFCKQQTSGGHLV) form the C-type lectin domain. A disulfide bond links cysteine 4 and cysteine 16.

Heterodimer of subunits alpha and beta; disulfide-linked. It depends on Ca(2+) as a cofactor. In terms of processing, glycosylated. Expressed by the venom gland.

It is found in the secreted. Functionally, binds to the platelet GPIb/IX/V receptor system and inhibits ristocetin-induced platelet aggregation in human platelet-rich plasma. Strongly inhibits platelet aggregation induced by ADP, calcium ionophore, thrombin and collagen. Does not inhibit U46619-induced platelet aggregation. The sequence is that of Snaclec lebecetin subunit beta from Macrovipera lebetinus (Levantine viper).